Consider the following 365-residue polypeptide: Chorismate synthase (365 aa).

Position 46 (R46) interacts with NADP(+). Residues 123–125 (RSS), 241–242 (NG), G281, 296–300 (KPTPS), and R322 contribute to the FMN site.

The protein belongs to the chorismate synthase family. Homotetramer. Requires FMNH2 as cofactor.

The enzyme catalyses 5-O-(1-carboxyvinyl)-3-phosphoshikimate = chorismate + phosphate. Its pathway is metabolic intermediate biosynthesis; chorismate biosynthesis; chorismate from D-erythrose 4-phosphate and phosphoenolpyruvate: step 7/7. In terms of biological role, catalyzes the anti-1,4-elimination of the C-3 phosphate and the C-6 proR hydrogen from 5-enolpyruvylshikimate-3-phosphate (EPSP) to yield chorismate, which is the branch point compound that serves as the starting substrate for the three terminal pathways of aromatic amino acid biosynthesis. This reaction introduces a second double bond into the aromatic ring system. The sequence is that of Chorismate synthase from Helicobacter pylori (strain ATCC 700392 / 26695) (Campylobacter pylori).